The chain runs to 548 residues: Chaperonin GroEL (548 aa).

ATP is bound by residues 29 to 32, Lys-50, 86 to 90, Gly-414, 478 to 480, and Asp-494; these read TLGP, DGTTT, and NAA.

The protein belongs to the chaperonin (HSP60) family. As to quaternary structure, forms a cylinder of 14 subunits composed of two heptameric rings stacked back-to-back. Interacts with the co-chaperonin GroES.

It is found in the cytoplasm. The enzyme catalyses ATP + H2O + a folded polypeptide = ADP + phosphate + an unfolded polypeptide.. In terms of biological role, together with its co-chaperonin GroES, plays an essential role in assisting protein folding. The GroEL-GroES system forms a nano-cage that allows encapsulation of the non-native substrate proteins and provides a physical environment optimized to promote and accelerate protein folding. In Psychrobacter sp. (strain PRwf-1), this protein is Chaperonin GroEL.